The following is a 214-amino-acid chain: ATP synthase subunit a (214 aa).

Transmembrane regions (helical) follow at residues 9–29, 64–84, 88–108, 121–141, 150–170, and 182–202; these read LDGM…VFMI, IMMV…TYGI, LWVN…SGYI, SGAP…SIMI, LVAN…VLSS, and LIMV…AYIF.

It belongs to the ATPase A chain family. As to quaternary structure, F-type ATPases have 2 components, CF(1) - the catalytic core - and CF(0) - the membrane proton channel. CF(1) has five subunits: alpha(3), beta(3), gamma(1), delta(1), epsilon(1). CF(0) has three main subunits: a, b and c.

The protein resides in the mitochondrion inner membrane. Functionally, mitochondrial membrane ATP synthase (F(1)F(0) ATP synthase or Complex V) produces ATP from ADP in the presence of a proton gradient across the membrane which is generated by electron transport complexes of the respiratory chain. F-type ATPases consist of two structural domains, F(1) - containing the extramembraneous catalytic core and F(0) - containing the membrane proton channel, linked together by a central stalk and a peripheral stalk. During catalysis, ATP synthesis in the catalytic domain of F(1) is coupled via a rotary mechanism of the central stalk subunits to proton translocation. Key component of the proton channel; it may play a direct role in the translocation of protons across the membrane. In Albinaria caerulea (Land snail), this protein is ATP synthase subunit a (ATP6).